The following is a 416-amino-acid chain: Glutamyl-tRNA reductase (416 aa).

Substrate-binding positions include 49–52 (TCNR), Ser-105, 110–112 (EPQ), and Gln-116. Cys-50 functions as the Nucleophile in the catalytic mechanism. NADP(+) is bound at residue 185-190 (GAGETI).

It belongs to the glutamyl-tRNA reductase family. Homodimer.

The enzyme catalyses (S)-4-amino-5-oxopentanoate + tRNA(Glu) + NADP(+) = L-glutamyl-tRNA(Glu) + NADPH + H(+). Its pathway is porphyrin-containing compound metabolism; protoporphyrin-IX biosynthesis; 5-aminolevulinate from L-glutamyl-tRNA(Glu): step 1/2. Its function is as follows. Catalyzes the NADPH-dependent reduction of glutamyl-tRNA(Glu) to glutamate 1-semialdehyde (GSA). This Shewanella oneidensis (strain ATCC 700550 / JCM 31522 / CIP 106686 / LMG 19005 / NCIMB 14063 / MR-1) protein is Glutamyl-tRNA reductase.